We begin with the raw amino-acid sequence, 436 residues long: MDDLSKLLFFLLLTISITTALPDKPGSGQINSNSVLVALLDSHYTELAELVEKALLLQTLEEAVGQHNITIFAPRNDALEKNLDPEFKSFLLQPKNLKSLQSLLMFHILPKRITSPQFSSAVVSHRTLSNDHLHFTNGKVNSAEITKPDDLTRPDGIIHGIERLLIPRSVQEDFNRRRSLRSIAAVLPEGAPEVDPRTHRLKKKPAPIPAGAPPVLPVYDAMSPGPSLAPAPAPGPGGPRHHFNGEAQVKDFIHTLLHYGGYNEMADILVNLTSLATEMGRLVSEGYVLTVLAPNDEAMAKLTTDQLSEPGAPEQIMYYHIIPEYQTEESMYNSVRRFGKIRYDSLRFPHKVEAQEADGSVKFGHGDGSAYLFDPDIYTDGRISVQGIDGVLFPEEKTPVEKKTGVPVVKKAPKPRRGKLMEVACTMLGSQFPTCQ.

A signal peptide spans 1-20 (MDDLSKLLFFLLLTISITTA). FAS1 domains are found at residues 31 to 165 (NSNS…ERLL) and 249 to 392 (VKDF…DGVL). N-linked (GlcNAc...) asparagine glycans are attached at residues N68 and N271.

This sequence belongs to the fasciclin-like AGP family.

The protein resides in the secreted. Its function is as follows. May be a cell surface adhesion protein. The sequence is that of Fasciclin-like arabinogalactan protein 15 (FLA15) from Arabidopsis thaliana (Mouse-ear cress).